A 48-amino-acid chain; its full sequence is MTKIPINIPATSGKIKFGITPSSNKSPSLSPSPSNGQLGGGRGYILEP.

A disordered region spans residues 1 to 48 (MTKIPINIPATSGKIKFGITPSSNKSPSLSPSPSNGQLGGGRGYILEP). Over residues 21-36 (PSSNKSPSLSPSPSNG) the composition is skewed to low complexity. Residues 37-48 (QLGGGRGYILEP) are compositionally biased toward gly residues.

This is an uncharacterized protein from Dictyostelium discoideum (Social amoeba).